The following is a 270-amino-acid chain: A-type potassium channel modulatory protein KCNIP2 (270 aa).

Residues 1 to 17 (MRGQGRKESLSESRDLD) show a composition bias toward basic and acidic residues. A disordered region spans residues 1 to 34 (MRGQGRKESLSESRDLDGSYDQLTGHPPGPSKKA). Serine 9 bears the Phosphoserine mark. Residues cysteine 45 and cysteine 46 are each lipidated (S-palmitoyl cysteine). The EF-hand 1; degenerate domain maps to 81-137 (FELSTVCHRPEGLEQLQEQTKFTRRELQVLYRGFKNECPSGIVNEENFKQIYSQFFP). EF-hand domains are found at residues 140 to 175 (DSSN…ILRG), 176 to 211 (TIDD…IYDM), and 224 to 259 (APRE…DENI). Ca(2+) contacts are provided by aspartate 153, asparagine 155, aspartate 157, serine 159, aspartate 164, aspartate 189, asparagine 191, aspartate 193, cysteine 195, glutamate 200, aspartate 237, asparagine 239, aspartate 241, and glutamate 248. An interaction with KCND2 region spans residues 257–270 (ENIMRSMQLFDNVI).

It belongs to the recoverin family. Component of heteromultimeric potassium channels. Identified in potassium channel complexes containing KCND1, KCND2, KCND3, KCNIP1, KCNIP2, KCNIP3, KCNIP4, DPP6 and DPP10. The KCND2-KCNIP2 channel complex contains four KCND2 and four KCNIP2 subunits. Interacts with KCND2. Probably part of a complex consisting of KCNIP1, KCNIP2 isoform 3 and KCND2. At least isoform 2 and isoform 3 can self-associate to form homodimers and homotetramers. Isoform 3 interacts with KCNIP1 in a calcium-dependent manner. Interacts with KCND3; each KCNIP2 monomer interacts with two adjacent KCND3 subunits, through both the N-terminal inactivation ball of a KCND3 subunit and a C-terminal helix from the adjacent KCND3 subunit, clamping them together; this interaction modulates the channel gating kinetics. Post-translationally, palmitoylated. Palmitoylation enhances association with the plasma membrane. In terms of tissue distribution, expressed in heart, brain and lung. In brain, abundantly expressed in striatum, hippocampus and olfactory bulb, moderately expressed in cerebral cortex and lowly expressed in thalamus and hypothalamus. Isoform 1 is predominant in cerebral cortex, striatum and hippocampus. Isoform 1, isoform 2 and isoform 3 are equally expressed in olfactory bulb. Iisoform 3 is expressed at high levels and isoform 1 at low levels in heart (in PubMed:11263977).

Its subcellular location is the cell membrane. Functionally, regulatory subunit of Kv4/D (Shal)-type voltage-gated rapidly inactivating A-type potassium channels. Modulates channel density, inactivation kinetics and rate of recovery from inactivation in a calcium-dependent and isoform-specific manner. Involved in KCND2 and KCND3 trafficking to the cell surface. Essential for the expression of I(To) currents in the heart. Required for normal protein levels of KCND2 in the heart ventricle. This chain is A-type potassium channel modulatory protein KCNIP2, found in Rattus norvegicus (Rat).